We begin with the raw amino-acid sequence, 185 residues long: MKYLIVGLGNIGGEYNGTRHNVGFRMVNALAEDGGVQFVEARYGAIARMRVKNAELILLKPNTYMNLSGNAVRYWMQQENIPREQVLVLVDDLALPFGTLRLKPKGSDAGHNGLKNIAEVMGSIDYARLRFGLGDEFSKGRQVDFVLGRFTPEEEEKLPELTKHAVEIIKSFCLAGIQRTMNRYN.

A tRNA-binding site is contributed by Tyr-15. The active-site Proton acceptor is His-20. Residues Tyr-64, Asn-66, and Asn-112 each coordinate tRNA.

The protein belongs to the PTH family. As to quaternary structure, monomer.

It localises to the cytoplasm. The enzyme catalyses an N-acyl-L-alpha-aminoacyl-tRNA + H2O = an N-acyl-L-amino acid + a tRNA + H(+). Its function is as follows. Hydrolyzes ribosome-free peptidyl-tRNAs (with 1 or more amino acids incorporated), which drop off the ribosome during protein synthesis, or as a result of ribosome stalling. In terms of biological role, catalyzes the release of premature peptidyl moieties from peptidyl-tRNA molecules trapped in stalled 50S ribosomal subunits, and thus maintains levels of free tRNAs and 50S ribosomes. This is Peptidyl-tRNA hydrolase from Porphyromonas gingivalis (strain ATCC BAA-308 / W83).